The chain runs to 377 residues: Chaperone protein DnaJ (377 aa).

A J domain is found at 8-73 (CYYETLEVER…DKRAAYDRFG (66 aa)). The CR-type zinc finger occupies 135 to 213 (GKTAQIEIPV…CSGQGRVTRE (79 aa)). Residues cysteine 148, cysteine 151, cysteine 165, cysteine 168, cysteine 187, cysteine 190, cysteine 201, and cysteine 204 each contribute to the Zn(2+) site. CXXCXGXG motif repeat units follow at residues 148-155 (CEACSGIG), 165-172 (CSTCGGAG), 187-194 (CPGCQGRG), and 201-208 (CPSCSGQG).

It belongs to the DnaJ family. As to quaternary structure, homodimer. It depends on Zn(2+) as a cofactor.

It is found in the cytoplasm. Functionally, participates actively in the response to hyperosmotic and heat shock by preventing the aggregation of stress-denatured proteins and by disaggregating proteins, also in an autonomous, DnaK-independent fashion. Unfolded proteins bind initially to DnaJ; upon interaction with the DnaJ-bound protein, DnaK hydrolyzes its bound ATP, resulting in the formation of a stable complex. GrpE releases ADP from DnaK; ATP binding to DnaK triggers the release of the substrate protein, thus completing the reaction cycle. Several rounds of ATP-dependent interactions between DnaJ, DnaK and GrpE are required for fully efficient folding. Also involved, together with DnaK and GrpE, in the DNA replication of plasmids through activation of initiation proteins. This is Chaperone protein DnaJ from Bradyrhizobium diazoefficiens (strain JCM 10833 / BCRC 13528 / IAM 13628 / NBRC 14792 / USDA 110).